The primary structure comprises 892 residues: LEAF RUST 10 DISEASE-RESISTANCE LOCUS RECEPTOR-LIKE PROTEIN KINASE-like 2.8 (892 aa).

Residues M1–S27 form the signal peptide. Topologically, residues N28 to T496 are extracellular. 12 N-linked (GlcNAc...) asparagine glycosylation sites follow: N42, N71, N88, N112, N186, N222, N230, N286, N358, N384, N407, and N458. The helical transmembrane segment at F497–C517 threads the bilayer. Residues F518–L892 lie on the Cytoplasmic side of the membrane. Phosphothreonine is present on T547. The region spanning K556–L854 is the Protein kinase domain. Residues V562–V570 and K584 contribute to the ATP site. Residue Y629 is modified to Phosphotyrosine. D680 acts as the Proton acceptor in catalysis. 2 positions are modified to phosphothreonine: T717 and T720.

The protein belongs to the protein kinase superfamily. Ser/Thr protein kinase family.

It localises to the membrane. It carries out the reaction L-seryl-[protein] + ATP = O-phospho-L-seryl-[protein] + ADP + H(+). The catalysed reaction is L-threonyl-[protein] + ATP = O-phospho-L-threonyl-[protein] + ADP + H(+). This Arabidopsis thaliana (Mouse-ear cress) protein is LEAF RUST 10 DISEASE-RESISTANCE LOCUS RECEPTOR-LIKE PROTEIN KINASE-like 2.8.